The following is a 386-amino-acid chain: Ribonucleoside-diphosphate reductase subunit M2 (386 aa).

Over residues 1-24 (MSSTRSPLKTKNENTISTKMNNMS) the composition is skewed to polar residues. The interval 1–36 (MSSTRSPLKTKNENTISTKMNNMSFVDKENTPPSLS) is disordered. S6 is modified (phosphoserine). T31 bears the Phosphothreonine mark. The Fe cation site is built by D135, E166, and H169. The active site involves Y173. Positions 229, 263, and 266 each coordinate Fe cation.

This sequence belongs to the ribonucleoside diphosphate reductase small chain family. In terms of assembly, heterodimer of a large and a small subunit. The cofactor is Fe cation.

The protein localises to the cytoplasm. It carries out the reaction a 2'-deoxyribonucleoside 5'-diphosphate + [thioredoxin]-disulfide + H2O = a ribonucleoside 5'-diphosphate + [thioredoxin]-dithiol. Its function is as follows. Provides the precursors necessary for DNA synthesis. Catalyzes the biosynthesis of deoxyribonucleotides from the corresponding ribonucleotides. This chain is Ribonucleoside-diphosphate reductase subunit M2 (rrm2), found in Danio rerio (Zebrafish).